Consider the following 130-residue polypeptide: Type VII secretion system extracellular protein C (130 aa).

Belongs to the EsxC family. In terms of assembly, forms both homodimers and heterodimers with EsxA. Homodimerization is calcium-dependent.

The protein resides in the secreted. Implements its pathogenic function during infection. In Staphylococcus aureus (strain Mu50 / ATCC 700699), this protein is Type VII secretion system extracellular protein C.